The chain runs to 144 residues: Protection of telomeres protein 1c (144 aa).

Belongs to the telombin family. Expressed at extremely low levels at the limit of detection.

The protein resides in the nucleus. Its subcellular location is the chromosome. It localises to the telomere. Its function is as follows. Binds specifically single-stranded telomeric DNA with weak affinity. Has probably no function in the regulation of telomere length. The chain is Protection of telomeres protein 1c from Arabidopsis thaliana (Mouse-ear cress).